The sequence spans 326 residues: Probable cell division protein WhiA (326 aa).

The H-T-H motif DNA-binding region spans 275–308; that stretch reads SLDELGRLADPPMTKDAIAGRIRRLLAMADKRAL.

The protein belongs to the WhiA family.

Its function is as follows. Involved in cell division and chromosome segregation. This Arthrobacter sp. (strain FB24) protein is Probable cell division protein WhiA.